We begin with the raw amino-acid sequence, 380 residues long: Glycogenin-2 (380 aa).

3 residues coordinate UDP: L10, Y16, and R95. Residues L10, Y16, R95, K104, D120, A121, D122, N158, T159, D185, D188, and Q189 each coordinate UDP-alpha-D-glucose. The UDP site is built by D120, A121, and D122. Residue D120 coordinates Mn(2+). D122 lines the Mn(2+) pocket. 2 O-linked (Glc...) tyrosine glycosylation sites follow: Y230 and Y232. Positions 249, 252, and 255 each coordinate UDP. H249 contributes to the Mn(2+) binding site. Residues G252 and K255 each contribute to the UDP-alpha-D-glucose site. The tract at residues 331–355 (SVDRNASQKSTAEKHDIEKPTSKPQ) is disordered. The span at 341 to 351 (TAEKHDIEKPT) shows a compositional bias: basic and acidic residues. An O-linked (Glc...) tyrosine glycan is attached at Y367.

It belongs to the glycosyltransferase 8 family. Glycogenin subfamily. As to quaternary structure, interacts with glycogen synthase GSY2. It depends on Mn(2+) as a cofactor.

Its subcellular location is the cytoplasm. The protein resides in the vacuole. It carries out the reaction L-tyrosyl-[glycogenin] + UDP-alpha-D-glucose = alpha-D-glucosyl-L-tyrosyl-[glycogenin] + UDP + H(+). The enzyme catalyses [1,4-alpha-D-glucosyl](n)-L-tyrosyl-[glycogenin] + UDP-alpha-D-glucose = [1,4-alpha-D-glucosyl](n+1)-L-tyrosyl-[glycogenin] + UDP + H(+). Functionally, self-glucosylating initiator of glycogen synthesis. It catalyzes the formation of a short alpha (1,4)-glucosyl chain covalently attached via a glucose 1-O-tyrosyl linkage to internal tyrosine residues and these chains act as primers for the elongation reaction catalyzed by glycogen synthase. Capable of transferring glucosyl residues to unbound acceptors such as free oligoglucans or oligoglucan derivatives. The sequence is that of Glycogenin-2 from Saccharomyces cerevisiae (strain ATCC 204508 / S288c) (Baker's yeast).